The chain runs to 249 residues: tRNA (guanine-N(1)-)-methyltransferase (249 aa).

S-adenosyl-L-methionine contacts are provided by residues glycine 113 and 133-138 (IGDFVL).

It belongs to the RNA methyltransferase TrmD family. In terms of assembly, homodimer.

It localises to the cytoplasm. It catalyses the reaction guanosine(37) in tRNA + S-adenosyl-L-methionine = N(1)-methylguanosine(37) in tRNA + S-adenosyl-L-homocysteine + H(+). Functionally, specifically methylates guanosine-37 in various tRNAs. In Aliivibrio salmonicida (strain LFI1238) (Vibrio salmonicida (strain LFI1238)), this protein is tRNA (guanine-N(1)-)-methyltransferase.